The primary structure comprises 190 residues: Threonylcarbamoyl-AMP synthase (190 aa).

Residues 7 to 190 enclose the YrdC-like domain; the sequence is GDAIAAAIDV…ALTGELFRQG (184 aa).

The protein belongs to the SUA5 family. TsaC subfamily.

The protein localises to the cytoplasm. The catalysed reaction is L-threonine + hydrogencarbonate + ATP = L-threonylcarbamoyladenylate + diphosphate + H2O. In terms of biological role, required for the formation of a threonylcarbamoyl group on adenosine at position 37 (t(6)A37) in tRNAs that read codons beginning with adenine. Catalyzes the conversion of L-threonine, HCO(3)(-)/CO(2) and ATP to give threonylcarbamoyl-AMP (TC-AMP) as the acyladenylate intermediate, with the release of diphosphate. This chain is Threonylcarbamoyl-AMP synthase, found in Shigella flexneri.